The following is a 3933-amino-acid chain: MIKKSEESKRLLRKKLNNDITNILLLFEKVQEWADLSNILQKLYLTIEKYELFVNVSSKFLLFRRLSQCLNPLLPSGVHSKALIIYSSIFKKVEMDFFINNIHILCSGIFEFMLHCTINLKTIYFKNIKSILRLKENVYIFAYALLLSLFNVVDSDNNILLYIYSINNYIGENIFFNNIWLLLLRHPEIRTNILNFLEASFSPQIYLLSKERIKMLLPYKDHLVLSSIIYCLNDKNILNQRITLSLLINNFPLSHVPNKKNKKKIIDKSKSNDYHMDKPPYSPFNASTSSVILNNSNMDSMNDNRINENNINNNDNKRHNIQINNDYLFGDMMNKQNDTTIMQSNKMLNRHNIIGEQHLDDDLLSSIHDDNSEKKNNNNFMLLNENNKISTSKEHLDNMHNRGIKSHEDIMGSNQNKMNLSNDEKDHWGGNLNSKVGNYDDKNICGKKHLGLKSEYGQVSYDESLERRLNNNNNNNNNNNNNNNNNGDNLKYQGSVDYDEHDISMSTENDKYGKMGNENMNDVFISKGKMMRKGYEDDGHHHININDDDNLNYDDNEDDEYGNYHNNNYNDRNYFNEYDEDDQYENNNNNNHSNNNNMLHLGSVDRNRRKQLKKKINNIGQTNNYDDDEEEEDEEEEDNNNNTSYNNNNNNSSSSSSIFFSDTSKKLIARNVIFLLKKSDIGLNRRIFKYLYLYESNDEKNFKDKEINFENYKIYCETIIDILENKSDDNYNSIAEVIYILFKNKDYININRYIMEQVFLYLLNFCYKNREDTSIKSFLKNMLNLNLISYENILNIFLYTFYYLRRNDDLFVHYTNIYIKKYINLLNIMTFFVEFIKHMNKYLYIQFLFHFNLATLKLMNFLNLKIINIIKKYSHVKDLNEKYFIDSNDVVSGRHSTLYYFYFFVTHYNNYYLNKCLSIIVKDILPQNPSNRKMGNYQSHYYANNKHMLYMNTHEIHSARMEEYSNKIQKVGFKNEIVDRKNKYDNNEYSESEIKMRAVDNSMNYIKRKVKKKNMESKDSSNSMSNMEINTNSTMANRLNHMQHIQHDGISSMEHMNNKINDNNNNNNVNYFFDGNNSNNNNNNNILENNNKLYFDKGYNGNYSKIENDQSFHNILMKYKFKLKQNLIDAIIKNHELYFFTNNCEYIIFLFYNYHLLIEKEKLNKSCFYFLKNILNNCTCENKNKFYFWCFLFLHIIRINFNKSLLKNYKIKEAGDDTDDDDDDDDDDDDEEEDDDDEDDDDEDDEEEDDEEDLGVDGLKNMSSKKGKKKKKKSVHKNKLMNKKYGRGGSSKYYYYLTSDKEIMLHGGMMGGVNYSDMEHDEDNLDVDDEDEQMFSYNKNKIRNKHFGELNKMKYMNEDITNNNNNINNNSNNNNNNKNNINNNNNNNNNNNNNNNNLNNLNNFNNNVSINNGNNKYRNYFRSTEEELLFNKRFVEFLLPYSNNIAKYIFQYIKILKKNKKFIKLFFDINYLYFFCDNMFCLKILKKSLKCKDNHELTINVKVILEYIINSKTNEYHIIHSNFYNLTHDVFKLYNRRNNLINYYLIKYIMRNKENLSYIFDNIIISMFDLITEIENLYEKIEMMKKDLSYSMMNNNDHVYDPNGMIEAADQRKSHYVSLKDNMNNMNNMNNVNNMNNVNNMNNVNNVNNVNNVNYHNNTINNNNNNNNFSNHTSYVNEKTQENNYHNLMNTYEKYLKKLKCKFDYISYFFLNMENFMLWLYKHKISKKIYHSRNKMTLTNYEKNMAIIICYICTEGNINSFFFRNYLDVFFILFLKIIYLNENISELNNSANNIIQKEKNNLKHNSLLEFKRDTLSMLNNIFNINHNKKFEYMKILNLYYRQIIHHLLFLYYYFTVKKYYVLQLQLVHFIRYILPLYEKNIDKKFLTNESTEKDKVFKRMKYNNYEEFISASKYHFEIINRNNYNMKNDVFIFSILRKSMTIIFNLNEQVLYKEVLKTIIDLIENIIDEKEVKNYYLTVFFLDLLYIIKMEDQKKKKNIFFIMKFCQFLIEIFKLIYRDEMKNELKCDKKFQDDNITIDIIENALSNNKMSTASFCTIFSIKTDDKFVNVQHKNISNLFSVIFNLYAFLKKKIKLYYKHNKHLINNDDKNNVVNNNSYIYYDNNSNVYNNNNTNIYNNNNNNENNAFNNNMPNNSNIMNNMNNMNDIYHISQHTNNNIRYNDVSSCGARGHNINSNENVNQNDLNNNSNYNYNRGMNNMNGDINNINGDINNMNGDINNMNGDINNMNGDINNMNGDINNMNGGNFKNPNSYNNNNNMNSYYSHNSSDYHKDNDNMRNNVNSSNSNFHNNNQDVQIMNRKNDSDGNVGNFDNNSTYSYMNNVNNDISMRLTNINNNNNININNNNNNNNNLFAYNKNNPNALVNNMNNQDKPDQHNNSHQYMYKENDMNQFGNSNYNNMDNTNNKFYNNYNYGKNVEGHTIYDNNNNNNNNSNNGAVNINSVQGENNVMSRNNILFNHNVNNNEYYFSQKNEDNMASMNNNHHNNYHNNNNNHHNNNINNHHNNNINNHHNMNRNNNIYSEDSKTNECYSMREKMGDVNVAYNSNFYDDKNNYTHMKNDLIKNEQKNNYGFCNNHENTFIYNCKNRMNRNNYAFNMGSKKNKKIMLLKVCLSNIISINKLLYFITRPEFLFIDNLYSIFKDYIKNRNEYNKERLSKSDYYYEQREKLYKEHRRKMNRQNIRTDSSNNNNNNNINSNNNNNNNNNNNNNNNNNNNNNIYNNNNYYYSSSINKVSFDDDEKIEVESFLDHNGVVGSNKKIKREKIREYFKKEKNLLKKLNFMTKFSKNTIKKSMIVMNNSDECIEKKKLSFSLTLLTEFDDVILIKIIDDLLNYYEKYKSKINLNEFMYFLFNIYLNICTLTKRIINHFIDFIFSFIKKITQTSQNIMSSLWFLYILFIIENNHIYVFNDKLQKKIIVEQISILIQISLYSYYSKNVKNNYNIQTPLPNFVQPFNIYYIIQNYFINNNYFHIKKNNKNIRYFYIKNLKLIEKNFNINDYSEIAAINALSFLLMCFYHTVNYNGTNKSYICESSVNIFYEHFSKYISLIYNNSLQNIFYRYVFLLIMNLLIDYNANSKYYIKKITFDLYSYITNVDIRCIKALSTLFKKLNETNIDELLLVPTSSIFSLKFNIINSRINYINKLSLIILAGNRNFYLCHLPKIAENISEYIKFCNDLKLYREILILICIIIIKNDENEIYIIIPTFISLILQIYHVERIKYKMAVENINNIDKDDDNYIYDFNSYNNKDVLSLLKTLLIIINILIKRNVSFINFYSWIFFKDISIKKNRLEQQNREPGNLMIYPGHKTLVYNNKKKKQKNVVRYVSSSSDKDESSVYNISVDEENSLKTQGRFFDDTYYKRKDNSGYTNKMKNFNSLTYEDKSSLMTGNQTSSTKDVGGMVNNAIRQNIEQNNMIHPNQINNNNNNNNNNNNVYNFNDFTNSMNQPNVINNNKKKKAFTTDDYFVKYDENQKVTKQTKLNHHNEDNLNDTITVYLNSNQEDYLYESKNNFTSIRSEHISSMVDIKKGSILNSNNILTNDNNTNNNIHSNIHNGSSSNNNNNNNSVCTGIKLDESKFVPFLDIIERIYSPNNILNKKYVSSEELKNEKSTRTYNSSLQEGSDYDEEEDEEYDVDADVDVDVDVDDDDDDDVDIVDVDVDDVVVDYNYYDNENNSVKIIDVDERKRSVHFYPQHLDGNTLKKNLYYNDNYLREYILSTKNELSGYSSFENNLSSSSVNSIKSNFSNTFSKDNINKNIITDDTSDDNDMMNSNNNMNSMMVPYNMHMTDDEFQENINNNNNNNNNNNDNMYLSSDDGYPSQSNHKWIHFNSLLNYDIHELSKKKKKKKKKISIHSCKNLPLVLVYLSKKIKLNFYKYSMKKPKEETIILLKELNSVENDINDLFLEVDLNEVYYDFLIR.

A run of 4 helical transmembrane segments spans residues 70-90 (LNPL…SSIF), 98-118 (FINN…HCTI), 140-160 (IFAY…NNIL), and 163-183 (IYSI…WLLL). 3 disordered regions span residues 468–494 (RLNN…KYQG), 543–600 (ININ…NMLH), and 614–656 (KKIN…SSSS). Over residues 470-486 (NNNNNNNNNNNNNNNNN) the composition is skewed to low complexity. Positions 546–561 (NDDDNLNYDDNEDDEY) are enriched in acidic residues. 2 stretches are compositionally biased toward low complexity: residues 563–576 (NYHN…NYFN) and 585–597 (ENNN…NNNN). Positions 620-651 (GQTNNYDDDEEEEDEEEEDNNNNTSYNNNNNN) form a coiled coil. A compositionally biased stretch (acidic residues) spans 625 to 639 (YDDDEEEEDEEEEDN). Residues 640 to 656 (NNNTSYNNNNNNSSSSS) are compositionally biased toward low complexity. A run of 3 helical transmembrane segments spans residues 782–802 (MLNL…YTFY), 842–862 (YLYI…MNFL), and 1186–1206 (FYFW…KSLL). A compositionally biased stretch (acidic residues) spans 1216 to 1255 (DDTDDDDDDDDDDDDEEEDDDDEDDDDEDDEEEDDEEDLG). Disordered regions lie at residues 1216 to 1284 (DDTD…MNKK) and 1361 to 1405 (TNNN…NNFN). Basic residues predominate over residues 1263–1284 (SSKKGKKKKKKSVHKNKLMNKK). Residues 1349–1403 (ELNKMKYMNEDITNNNNNINNNSNNNNNNKNNINNNNNNNNNNNNNNNNLNNLNN) adopt a coiled-coil conformation. Over residues 1362 to 1405 (NNNNNINNNSNNNNNNKNNINNNNNNNNNNNNNNNNLNNLNNFN) the composition is skewed to low complexity. Helical transmembrane passes span 1462–1482 (FIKL…MFCL) and 1997–2017 (KNIF…KLIY). Residues 2691–2739 (HRRKMNRQNIRTDSSNNNNNNNINSNNNNNNNNNNNNNNNNNNNNNIYN) are disordered. Residues 2704–2739 (SSNNNNNNNINSNNNNNNNNNNNNNNNNNNNNNIYN) show a composition bias toward low complexity. 5 helical membrane passes run 2860–2880 (INLN…CTLT), 2905–2925 (IMSS…HIYV), 3017–3037 (YSEI…YHTV), 3200–3220 (ILIL…YIII), and 3276–3296 (IIIN…SWIF). Residues 3620–3646 (LKNEKSTRTYNSSLQEGSDYDEEEDEE) are disordered. Positions 3637–3646 (SDYDEEEDEE) are enriched in acidic residues. The stretch at 3897–3925 (KEETIILLKELNSVENDINDLFLEVDLNE) forms a coiled coil.

It belongs to the DOP1 family.

The protein resides in the membrane. Its function is as follows. May be involved in protein traffic between late Golgi and early endosomes. The protein is Protein DOP1 homolog PFC0245c of Plasmodium falciparum (isolate 3D7).